A 209-amino-acid polypeptide reads, in one-letter code: MEGGGGSGNKTTGGLAGFFGAGGAGYSHADLAGVPLTGMNPLSPYLNVDPRYLVQDTDEFILPTGANKTRGRFELAFFTIGGCCMTVAAFGAMNGLRLGLKETQNMAWSKPRNVQILNMVTRQGALWANTLGSLALLYSAFGVIIEKTRGAEDDLNTVAAGTMTGMLYKCTGGLRGIARGGLTGLTLTSLYALYNNWEHMKGSLLQQSL.

Transmembrane regions (helical) follow at residues 73–93, 125–145, and 172–194; these read FELAFFTIGGCCMTVAAFGAM, ALWANTLGSLALLYSAFGVII, and GGLRGIARGGLTGLTLTSLYALY.

This sequence belongs to the Tim17/Tim22/Tim23 family. In terms of assembly, component of the TIM23 complex at least composed of TIMM23, TIMM17 (TIMM17A or TIMM17B) and TIMM50; within this complex, directly interacts with TIMM50. The complex interacts with the TIMM44 component of the PAM complex and with DNAJC15. Upon mitochondrial depolarization, interacts with PINK1; the interaction is required for PINK1 accumulation at the outer mitochondrial membrane, kinase activation by autophosphorylation and PRKN recruitement to mitochondria.

It is found in the mitochondrion inner membrane. Its function is as follows. Essential component of the TIM23 complex, a complex that mediates the translocation of transit peptide-containing proteins across the mitochondrial inner membrane. Has a role in the activation of stress-induced mitophagy by protecting PINK1 from OMA1-mediated degradation and facilitating its accumulation at the outer mitochondrial membrane in response to depolarization. The sequence is that of Mitochondrial import inner membrane translocase subunit Tim23 (TIMM23) from Pongo abelii (Sumatran orangutan).